A 732-amino-acid chain; its full sequence is Acylamino-acid-releasing enzyme (732 aa).

Met1 is modified (blocked amino end (Met); alternate). Met1 bears the N-acetylmethionine; alternate mark. A phosphoserine mark is found at Ser185 and Ser187. Active-site charge relay system residues include Ser587, Asp675, and His707.

Belongs to the peptidase S9C family. As to quaternary structure, homotetramer.

Its subcellular location is the cytoplasm. The enzyme catalyses Cleavage of an N-acetyl or N-formyl amino acid from the N-terminus of a polypeptide.. Homotetramerization is required for activity. Tetramerization results in the formation of a gated channel which is involved in substrate selection and substrate access to the catalytic sites. This enzyme catalyzes the hydrolysis of the N-terminal peptide bond of an N-acetylated peptide to generate an N-acetylated amino acid and a peptide with a free N-terminus. It preferentially cleaves off Ac-Ala, Ac-Met and Ac-Ser. Also, involved in the degradation of oxidized and glycated proteins. The sequence is that of Acylamino-acid-releasing enzyme (Apeh) from Rattus norvegicus (Rat).